Consider the following 297-residue polypeptide: Protoheme IX farnesyltransferase 1 (297 aa).

9 helical membrane passes run 23–43 (VVVL…RAGV), 45–65 (WSVL…AAAV), 93–113 (LPAL…LLMF), 117–137 (LTAW…TGFL), 145–165 (IVIG…AVSG), 171–191 (PLLL…ALAI), 216–236 (LHIL…YAIH), 241–261 (LYLV…WVLY), and 277–297 (IGYL…LLNL).

The protein belongs to the UbiA prenyltransferase family. Protoheme IX farnesyltransferase subfamily.

The protein resides in the cell inner membrane. It carries out the reaction heme b + (2E,6E)-farnesyl diphosphate + H2O = Fe(II)-heme o + diphosphate. It participates in porphyrin-containing compound metabolism; heme O biosynthesis; heme O from protoheme: step 1/1. Functionally, converts heme B (protoheme IX) to heme O by substitution of the vinyl group on carbon 2 of heme B porphyrin ring with a hydroxyethyl farnesyl side group. The protein is Protoheme IX farnesyltransferase 1 of Pseudomonas putida (strain W619).